A 182-amino-acid chain; its full sequence is Orotate phosphoribosyltransferase (182 aa).

Residues R96, K97, K100, H102, and 122–130 contribute to the 5-phospho-alpha-D-ribose 1-diphosphate site; that span reads EDTSTTGGS. The orotate site is built by T126 and R154.

This sequence belongs to the purine/pyrimidine phosphoribosyltransferase family. PyrE subfamily. Homodimer. It depends on Mg(2+) as a cofactor.

It catalyses the reaction orotidine 5'-phosphate + diphosphate = orotate + 5-phospho-alpha-D-ribose 1-diphosphate. It functions in the pathway pyrimidine metabolism; UMP biosynthesis via de novo pathway; UMP from orotate: step 1/2. Functionally, catalyzes the transfer of a ribosyl phosphate group from 5-phosphoribose 1-diphosphate to orotate, leading to the formation of orotidine monophosphate (OMP). In Streptomyces avermitilis (strain ATCC 31267 / DSM 46492 / JCM 5070 / NBRC 14893 / NCIMB 12804 / NRRL 8165 / MA-4680), this protein is Orotate phosphoribosyltransferase.